A 1162-amino-acid polypeptide reads, in one-letter code: Paired amphipathic helix protein Sin3-like 5 (1162 aa).

Positions 1-37 are disordered; sequence MKRVREEVYVEPQMRGPTVSSRGETNGRPSTISGGGT. The span at 18–30 shows a compositional bias: polar residues; it reads TVSSRGETNGRPS. PAH domains are found at residues 28 to 109 and 123 to 193; these read RPST…LPKG and KPVD…LPDF. Disordered regions lie at residues 702-727, 743-779, 803-830, and 1121-1143; these read RVSDVSMGGHKVEREEGELSPTESCE, QKLPDNEISNTDREPKEGACGTEAVTRSNALPEDDDN, GGQVSSDEEHKGAESENEAGGMVNSNEG, and KKATLNPTGPENVKTSDSSELSR. Phosphoserine is present on Ser817. Residues 1123-1139 show a composition bias toward polar residues; that stretch reads ATLNPTGPENVKTSDSS.

The protein localises to the nucleus. Functionally, acts as a transcriptional repressor. Plays roles in regulating gene expression and genome stability. This is Paired amphipathic helix protein Sin3-like 5 (SNL5) from Arabidopsis thaliana (Mouse-ear cress).